Consider the following 185-residue polypeptide: Peptidyl-tRNA hydrolase (185 aa).

Tyrosine 14 lines the tRNA pocket. The active-site Proton acceptor is the histidine 19. TRNA-binding residues include phenylalanine 64, asparagine 66, and asparagine 112.

It belongs to the PTH family. In terms of assembly, monomer.

It localises to the cytoplasm. The enzyme catalyses an N-acyl-L-alpha-aminoacyl-tRNA + H2O = an N-acyl-L-amino acid + a tRNA + H(+). Hydrolyzes ribosome-free peptidyl-tRNAs (with 1 or more amino acids incorporated), which drop off the ribosome during protein synthesis, or as a result of ribosome stalling. Functionally, catalyzes the release of premature peptidyl moieties from peptidyl-tRNA molecules trapped in stalled 50S ribosomal subunits, and thus maintains levels of free tRNAs and 50S ribosomes. This is Peptidyl-tRNA hydrolase from Lactobacillus johnsonii (strain CNCM I-12250 / La1 / NCC 533).